The sequence spans 602 residues: Laccase 1 (602 aa).

The signal sequence occupies residues 1–20 (MDHFARVSLVAALLYTNTWA). Plastocyanin-like domains are found at residues 30 to 128 (TWEE…VRPK) and 157 to 345 (YLVV…RIPN). The Cu cation site is built by histidine 78, histidine 80, histidine 108, and histidine 110. Residues asparagine 176, asparagine 241, asparagine 264, asparagine 388, asparagine 430, asparagine 454, and asparagine 470 are each glycosylated (N-linked (GlcNAc...) asparagine). The 124-residue stretch at 461–584 (NEGLLLRTRN…GGMGMVIMDG (124 aa)) folds into the Plastocyanin-like 3 domain. Cu cation is bound by residues histidine 492, histidine 495, and histidine 497. A glycan (N-linked (GlcNAc...) asparagine) is linked at asparagine 512. Cu cation-binding residues include histidine 566, cysteine 567, histidine 568, and histidine 572.

The protein belongs to the multicopper oxidase family. Requires Cu cation as cofactor.

The protein resides in the cell surface. The protein operates within pigment biosynthesis. Its function is as follows. Laccase; part of the Pks1 gene cluster that mediates the biosynthesis of an anthraquinone derivative pigment that contributes to conidial pigmentation that provides protection from UV radiation, heat and cold stress. The polyketide synthase Pks1 produces 1-acetyl-2,4,6,8-tetrahydroxy-9,10-anthraquinone though condensation of acetyl-CoA with malonyl-CoA. The dehydratase EthD and the laccase Mlac1 further convert the anthraquinone derivative into the final conidial pigment. This chain is Laccase 1, found in Metarhizium album (strain ARSEF 1941).